We begin with the raw amino-acid sequence, 144 residues long: Cell division protein SepF (144 aa).

Residues E14 to E31 show a composition bias toward acidic residues. Positions E14 to R41 are disordered.

Belongs to the SepF family. Homodimer. Interacts with FtsZ.

It localises to the cytoplasm. Functionally, cell division protein that is part of the divisome complex and is recruited early to the Z-ring. Probably stimulates Z-ring formation, perhaps through the cross-linking of FtsZ protofilaments. Its function overlaps with FtsA. In Lactobacillus johnsonii (strain CNCM I-12250 / La1 / NCC 533), this protein is Cell division protein SepF.